A 500-amino-acid chain; its full sequence is Cytochrome P450 71B35 (500 aa).

A helical membrane pass occupies residues 1 to 21 (MAHIWLLPLIFLVCILLAVFN). Cys-439 serves as a coordination point for heme.

Belongs to the cytochrome P450 family. Heme serves as cofactor.

The protein localises to the membrane. This chain is Cytochrome P450 71B35 (CYP71B35), found in Arabidopsis thaliana (Mouse-ear cress).